The primary structure comprises 251 residues: Aquaporin (251 aa).

Over methionine 1–serine 11 the chain is Cytoplasmic. The helical transmembrane segment at leucine 12–glycine 32 threads the bilayer. Residues serine 33 to lysine 42 are Extracellular-facing. A helical transmembrane segment spans residues valine 43 to valine 63. The Cytoplasmic portion of the chain corresponds to threonine 64–cysteine 86. The NPA signature appears at asparagine 69 to alanine 71. A helical transmembrane segment spans residues glycine 87–valine 107. Residues cysteine 108–asparagine 133 lie on the Extracellular side of the membrane. A helical membrane pass occupies residues valine 134–valine 154. The Cytoplasmic segment spans residues asparagine 155 to arginine 179. The chain crosses the membrane as a helical span at residues isoleucine 180–threonine 200. Over serine 201–tryptophan 224 the chain is Extracellular. Positions asparagine 206 to glycine 208 match the NPG motif. The helical transmembrane segment at leucine 225 to leucine 245 threads the bilayer. At tyrosine 246–asparagine 251 the chain is on the cytoplasmic side.

Belongs to the MIP/aquaporin (TC 1.A.8) family.

The protein resides in the cell membrane. In terms of biological role, water channel required to facilitate the transport of water across membranes. Involved in osmotolerance. The sequence is that of Aquaporin (AQP) from Encephalitozoon hellem (Microsporidian parasite).